Consider the following 226-residue polypeptide: Putative ankyrin repeat protein RF_0939 (226 aa).

ANK repeat units lie at residues 56-86 (VSTTELFLASSNNALKVAEWLVETKKANVNM), 91-120 (FKDTPLNSAARHGSYKVAEYLIAKGAAVNG), 125-154 (LLGPPLYEAVSGKYLNVAKLLLEKGAAVDQ), and 157-194 (SGETPLHAVAKNVRYTSKDIKDDEIYKLLVSYGADTNA).

The chain is Putative ankyrin repeat protein RF_0939 from Rickettsia felis (strain ATCC VR-1525 / URRWXCal2) (Rickettsia azadi).